The primary structure comprises 98 residues: NADH-ubiquinone oxidoreductase chain 4L (98 aa).

3 helical membrane-spanning segments follow: residues 1-21, 26-46, and 59-79; these read MTHI…GLTF, LLSA…ALAM, and APLL…SLLV.

It belongs to the complex I subunit 4L family.

The protein resides in the mitochondrion membrane. It carries out the reaction a ubiquinone + NADH + 5 H(+)(in) = a ubiquinol + NAD(+) + 4 H(+)(out). Core subunit of the mitochondrial membrane respiratory chain NADH dehydrogenase (Complex I) which catalyzes electron transfer from NADH through the respiratory chain, using ubiquinone as an electron acceptor. Part of the enzyme membrane arm which is embedded in the lipid bilayer and involved in proton translocation. The sequence is that of NADH-ubiquinone oxidoreductase chain 4L (MT-ND4L) from Polypterus ornatipinnis (Ornate bichir).